Here is a 233-residue protein sequence, read N- to C-terminus: Flagellar calcium-binding protein TB-17 (233 aa).

Polar residues predominate over residues 1 to 11; that stretch reads MGCSGSKNASN. A disordered region spans residues 1–29; the sequence is MGCSGSKNASNPKDGAASKGGKDGKTTAD. The span at 20 to 29 shows a compositional bias: basic and acidic residues; that stretch reads GGKDGKTTAD. EF-hand domains follow at residues 48 to 83, 130 to 165, and 167 to 202; these read ESKS…ILKL, YDIF…LKEW, and VDIT…KKLQ. Positions 61, 63, 65, 67, 72, 143, 145, 147, 154, 180, 182, 184, and 191 each coordinate Ca(2+). Residues 203 to 233 are disordered; sequence VSGDPDDEENGANEGDGANAGDGVPAAEGSA. The span at 214 to 225 shows a compositional bias: low complexity; sequence ANEGDGANAGDG.

This sequence belongs to the calflagin family.

It is found in the cell projection. It localises to the cilium. The protein resides in the flagellum. In terms of biological role, may contribute to the rapid motility of the trypanosomes, playing a role either in flagellar structure or in calcium metabolism. Could alternate between a GDP-bound inactive form to a calcium/GTP-bound active form. The chain is Flagellar calcium-binding protein TB-17 (FCABP) from Trypanosoma brucei brucei.